A 391-amino-acid polypeptide reads, in one-letter code: Putative F-box protein At1g47730 (391 aa).

Basic and acidic residues predominate over residues 1–12; the sequence is MEQREEKTENIQ. A disordered region spans residues 1-25; the sequence is MEQREEKTENIQRKRSRGKSSSSSL. An F-box domain is found at 19–68; the sequence is KSSSSSLPLDLTSEIFSRLPAKSVVRFRCVSKLWSSITTAPYFTNSFETR.

This is Putative F-box protein At1g47730 from Arabidopsis thaliana (Mouse-ear cress).